We begin with the raw amino-acid sequence, 942 residues long: Exopolysaccharide phosphotransferase SCO2592 (942 aa).

It belongs to the stealth family.

The protein is Exopolysaccharide phosphotransferase SCO2592 of Streptomyces coelicolor (strain ATCC BAA-471 / A3(2) / M145).